A 745-amino-acid chain; its full sequence is uncharacterized protein (745 aa).

The HTH araC/xylS-type domain maps to asparagine 158–aspartate 256. DNA-binding regions (H-T-H motif) lie at residues serine 175–leucine 196 and isoleucine 223–threonine 246.

This is an uncharacterized protein from Staphylococcus aureus (strain MRSA252).